The following is a 1647-amino-acid chain: Ras GTPase-activating-like protein IQG1 (1647 aa).

Positions 18–51 (DTTATTTTTTTSNVLQPSNRLNSPTKFNRKSLDN) are disordered. Positions 19–28 (TTATTTTTTT) are enriched in low complexity. Residues 29–43 (SNVLQPSNRLNSPTK) show a composition bias toward polar residues. Serine 48 carries the post-translational modification Phosphoserine. 3 positions are modified to phosphothreonine: threonine 66, threonine 72, and threonine 82. Residues serine 83, serine 91, and serine 139 each carry the phosphoserine modification. Residues 143–162 (FNTQSNVHTPLKQLNQPIGT) are compositionally biased toward polar residues. The segment at 143–175 (FNTQSNVHTPLKQLNQPIGTPSSSSLSPAKNAS) is disordered. The span at 163-175 (PSSSSLSPAKNAS) shows a compositional bias: low complexity. Residues serine 165, serine 167, and serine 169 each carry the phosphoserine modification. A Calponin-homology (CH) domain is found at 184 to 291 (LCRIEAIKQW…FCLHALSYIL (108 aa)). Positions 326-427 (PLPNFSSADT…STSNAKLELH (102 aa)) are disordered. Residues 342–355 (TSNNNSSTTSATAA) show a composition bias toward low complexity. Threonine 367 is modified (phosphothreonine). A compositionally biased stretch (low complexity) spans 368-379 (PSPLKRPQQLQK). Serine 369 carries the post-translational modification Phosphoserine. Composition is skewed to basic and acidic residues over residues 380–392 (KQLELVEDNKPEL) and 402–413 (ISRDDPFTDRVD). 2 positions are modified to phosphoserine: serine 433 and serine 440. IQ domains are found at residues 467–478 (FQSLARGAVFRY), 528–539 (LQSIIRKNFVIN), 556–567 (LQSLIRGKLTRD), 586–597 (FQSLVRMKSIYS), 616–627 (LQSIARSQLYHR), 642–653 (IQSIIRRNAVIE), 672–683 (LQSIARGGVART), 734–745 (VQTLFRGVLSRY), and 764–775 (LQSVARGKLMRG). A coiled-coil region spans residues 841-919 (LSDLKDLIIE…KKIELWQTLF (79 aa)). The 266-residue stretch at 958-1223 (PVRDSSITYH…DTVKSIISQA (266 aa)) folds into the Ras-GAP domain. A phosphoserine mark is found at serine 1064, serine 1068, serine 1088, serine 1383, and serine 1385.

Interacts with myosin MYO1 and its light chain MLC1. Interacts with BNI1. Interacts with BNR1. Interacts with CLB2. Interacts with CLB4. Interacts with CDC28. Post-translationally, hyperphosphorylated. Phosphorylation is cell cycle-dependent and peaks at the time of cytokinesis. Contains 21 consensus sites for cyclin-dependent kinases (CDKs). At least some of them are phosphorylated by the CLB2-CDC28 kinase complex. Mutation of 15 of the phosphorylation sites to Ala caused both premature assembly and delayed disassembly of the actomyosin ring, blocked interaction with the actin-nucleating proteins BNI1 and BNR1, and resulted in defects in cytokinesis.

The protein localises to the bud neck. Required for the assembly and the contraction of the actomyosin ring at the bud neck during cytokinesis. The sequence is that of Ras GTPase-activating-like protein IQG1 (IQG1) from Candida albicans (strain SC5314 / ATCC MYA-2876) (Yeast).